A 262-amino-acid polypeptide reads, in one-letter code: Acyl-[acyl-carrier-protein]--UDP-N-acetylglucosamine O-acyltransferase (262 aa).

The protein belongs to the transferase hexapeptide repeat family. LpxA subfamily. In terms of assembly, homotrimer.

It is found in the cytoplasm. The catalysed reaction is a (3R)-hydroxyacyl-[ACP] + UDP-N-acetyl-alpha-D-glucosamine = a UDP-3-O-[(3R)-3-hydroxyacyl]-N-acetyl-alpha-D-glucosamine + holo-[ACP]. The protein operates within glycolipid biosynthesis; lipid IV(A) biosynthesis; lipid IV(A) from (3R)-3-hydroxytetradecanoyl-[acyl-carrier-protein] and UDP-N-acetyl-alpha-D-glucosamine: step 1/6. In terms of biological role, involved in the biosynthesis of lipid A, a phosphorylated glycolipid that anchors the lipopolysaccharide to the outer membrane of the cell. This Burkholderia thailandensis (strain ATCC 700388 / DSM 13276 / CCUG 48851 / CIP 106301 / E264) protein is Acyl-[acyl-carrier-protein]--UDP-N-acetylglucosamine O-acyltransferase.